A 277-amino-acid polypeptide reads, in one-letter code: Large ribosomal subunit protein uL2c (277 aa).

Positions 224–257 are disordered; it reads VMNPIDHPHGGGEGRAPIGRKKPLTPWGHPALGR.

Belongs to the universal ribosomal protein uL2 family. Part of the 50S ribosomal subunit.

The protein resides in the plastid. It is found in the chloroplast. The sequence is that of Large ribosomal subunit protein uL2c (rpl2) from Anthoceros angustus (Hornwort).